A 434-amino-acid polypeptide reads, in one-letter code: Trigger factor (434 aa).

The PPIase FKBP-type domain maps to 161–246 (GDRVVIDFAG…VKGVEAPILP (86 aa)).

Belongs to the FKBP-type PPIase family. Tig subfamily.

It localises to the cytoplasm. The catalysed reaction is [protein]-peptidylproline (omega=180) = [protein]-peptidylproline (omega=0). Functionally, involved in protein export. Acts as a chaperone by maintaining the newly synthesized protein in an open conformation. Functions as a peptidyl-prolyl cis-trans isomerase. The sequence is that of Trigger factor from Aromatoleum aromaticum (strain DSM 19018 / LMG 30748 / EbN1) (Azoarcus sp. (strain EbN1)).